A 230-amino-acid chain; its full sequence is 2,3-bisphosphoglycerate-dependent phosphoglycerate mutase 1 (230 aa).

Substrate-binding positions include 8-15 (RHGQSEWN), 21-22 (TG), arginine 60, 87-90 (ERHY), lysine 98, 114-115 (RR), and 183-184 (GN). The active-site Tele-phosphohistidine intermediate is the histidine 9. Catalysis depends on glutamate 87, which acts as the Proton donor/acceptor.

Belongs to the phosphoglycerate mutase family. BPG-dependent PGAM subfamily.

The catalysed reaction is (2R)-2-phosphoglycerate = (2R)-3-phosphoglycerate. It functions in the pathway carbohydrate degradation; glycolysis; pyruvate from D-glyceraldehyde 3-phosphate: step 3/5. Catalyzes the interconversion of 2-phosphoglycerate and 3-phosphoglycerate. In Lactobacillus johnsonii (strain CNCM I-12250 / La1 / NCC 533), this protein is 2,3-bisphosphoglycerate-dependent phosphoglycerate mutase 1.